The following is a 436-amino-acid chain: Trigger factor (436 aa).

In terms of domain architecture, PPIase FKBP-type spans 162-247; that stretch reads GDRVIIDFEG…LNNVSEPTLP (86 aa).

The protein belongs to the FKBP-type PPIase family. Tig subfamily.

It localises to the cytoplasm. The catalysed reaction is [protein]-peptidylproline (omega=180) = [protein]-peptidylproline (omega=0). Functionally, involved in protein export. Acts as a chaperone by maintaining the newly synthesized protein in an open conformation. Functions as a peptidyl-prolyl cis-trans isomerase. In Neisseria gonorrhoeae (strain ATCC 700825 / FA 1090), this protein is Trigger factor.